The sequence spans 381 residues: MIPQTSSLPKPHGGVLVERIRVAHPREYDHLPALELDERAYADLELIATGVYSPLEGFMGQADYLSVLEEMRLTNGLPWSIPITLGVSAQDAASYRKTVRLTKDGRTVGLLDVEEQYRPDKEHEALAVYRTTDLAHPGVAALFARGDVYLAGKVQLLTLDRGPFPEHHYTPRETRQLFQERGWQTIVAFQTRNPIHRAHEYLHKVALESLDGLFLHPLVGSTKSDDVPAPVRMAAYKVLLERYYPQNRVLLGVYPAAMRYAGPREAILHAISRKNYGCTHFIVGRDHAGVGNYYGPYEAQAIFDHFRPEEIGIHILKFEQTFYCVTCAAVVSPRTCPHDTQHHLVLSGTRVRELLRAGSPLPPEFTRPEVAEVLRAAYQTL.

Belongs to the sulfate adenylyltransferase family.

It carries out the reaction sulfate + ATP + H(+) = adenosine 5'-phosphosulfate + diphosphate. It functions in the pathway sulfur metabolism; hydrogen sulfide biosynthesis; sulfite from sulfate: step 1/3. This is Sulfate adenylyltransferase from Chloroflexus aurantiacus (strain ATCC 29366 / DSM 635 / J-10-fl).